The primary structure comprises 341 residues: Retinol dehydrogenase 10 (341 aa).

The chain crosses the membrane as a helical; Signal-anchor span at residues Ile3–Ala23. Leu40–Val64 lines the NADP(+) pocket. Position 197 (Ser197) interacts with substrate. Tyr210 functions as the Proton acceptor in the catalytic mechanism.

The protein belongs to the short-chain dehydrogenases/reductases (SDR) family. Detected in retina, entire eyecups and in liver (at protein level).

The protein resides in the microsome membrane. Its subcellular location is the endoplasmic reticulum membrane. It catalyses the reaction all-trans-retinol + NADP(+) = all-trans-retinal + NADPH + H(+). It functions in the pathway cofactor metabolism; retinol metabolism. Retinol dehydrogenase with a clear preference for NADP. Converts all-trans-retinol to all-trans-retinal. This Rattus norvegicus (Rat) protein is Retinol dehydrogenase 10 (Rdh10).